A 407-amino-acid polypeptide reads, in one-letter code: Obg-like ATPase homolog (407 aa).

Positions 46–301 (LKIGIVGMPN…LTPEEAAQEC (256 aa)) constitute an OBG-type G domain. Residues 55 to 60 (NIGKST) and methionine 249 each bind ATP. The TGS domain occupies 322–405 (NLIHYFTASE…EPGDIIFWKI (84 aa)).

This sequence belongs to the TRAFAC class OBG-HflX-like GTPase superfamily. OBG GTPase family.

Hydrolyzes ATP, and can also hydrolyze GTP with lower efficiency. Has lower affinity for GTP. The sequence is that of Obg-like ATPase homolog from Schizosaccharomyces pombe (strain 972 / ATCC 24843) (Fission yeast).